The sequence spans 1162 residues: DNA-directed RNA polymerase subunit beta (1162 aa).

This sequence belongs to the RNA polymerase beta chain family. As to quaternary structure, the RNAP catalytic core consists of 2 alpha, 1 beta, 1 beta' and 1 omega subunit. When a sigma factor is associated with the core the holoenzyme is formed, which can initiate transcription.

The enzyme catalyses RNA(n) + a ribonucleoside 5'-triphosphate = RNA(n+1) + diphosphate. DNA-dependent RNA polymerase catalyzes the transcription of DNA into RNA using the four ribonucleoside triphosphates as substrates. The protein is DNA-directed RNA polymerase subunit beta of Clavibacter michiganensis subsp. michiganensis (strain NCPPB 382).